We begin with the raw amino-acid sequence, 446 residues long: MTSLEMALEYIKINNVKFLRFQFVDIHGEPKNIAYPVKLGTADGEEELMGVLENGLFFDGSSIEGFVEIEDSDMVLKPDLSTLSVLPWRPSEKSVARIICDVYRKNGKPFEGDPRGCLKRVLAEFKEEFKGEYFVGPEPEFFILKNENGKWVPGDDAGYFELEPLDEGNDLRRNIVFALENLGFHVEASHHEVAPGQHEVDFKYDNAVKTADSVITFKTTIKTLAKQSGVLATFMPKPFFGMNGSGMHCNQSIWLDGKPSFYDENNAHQLSDICLSYIGGILEHTKALVSVTNPTVNSYKRLVPGYEAPVNIAWANSNRTSIIRVPAARGKGTRVEFRAPDPACNPYLAFTVMLAAGLDGVRRKLIAPEPVEKNIFAMSEAEKREANIDSVPSNLYDAIEELRQDKVLKKALGDHIFNKFIEIKTKEYDAYRTAVTDWEFNKYVRI.

Residues 14–107 (NNVKFLRFQF…IICDVYRKNG (94 aa)) enclose the GS beta-grasp domain. The 333-residue stretch at 114–446 (PRGCLKRVLA…DWEFNKYVRI (333 aa)) folds into the GS catalytic domain. Residues Glu-138 and Glu-140 each contribute to the Mg(2+) site. ATP is bound at residue Glu-187. The Mg(2+) site is built by Glu-192 and Glu-199. Residues 243–244 (NG) and Gly-244 each bind L-glutamate. His-248 contacts Mg(2+). Ser-252 is a binding site for ATP. Arg-301, Glu-307, and Arg-319 together coordinate L-glutamate. Positions 319, 324, and 331 each coordinate ATP. Residue Glu-336 coordinates Mg(2+). Arg-338 contacts L-glutamate.

Belongs to the glutamine synthetase family. Oligomer of 12 subunits arranged in the form of two hexagons. Mg(2+) serves as cofactor.

It localises to the cytoplasm. The enzyme catalyses L-glutamate + NH4(+) + ATP = L-glutamine + ADP + phosphate + H(+). Functionally, probably involved in nitrogen metabolism via ammonium assimilation. Catalyzes the ATP-dependent biosynthesis of glutamine from glutamate and ammonia. The sequence is that of Glutamine synthetase from Methanococcus voltae.